We begin with the raw amino-acid sequence, 139 residues long: ATP synthase epsilon chain (139 aa).

The protein belongs to the ATPase epsilon chain family. As to quaternary structure, F-type ATPases have 2 components, CF(1) - the catalytic core - and CF(0) - the membrane proton channel. CF(1) has five subunits: alpha(3), beta(3), gamma(1), delta(1), epsilon(1). CF(0) has three main subunits: a, b and c.

The protein localises to the cell membrane. Functionally, produces ATP from ADP in the presence of a proton gradient across the membrane. The chain is ATP synthase epsilon chain from Symbiobacterium thermophilum (strain DSM 24528 / JCM 14929 / IAM 14863 / T).